We begin with the raw amino-acid sequence, 683 residues long: Cytoskeleton-associated protein 2 (683 aa).

2 disordered regions span residues 1–28 (MSTP…QRRQ) and 153–175 (NSKK…KKPV). A phosphoserine mark is found at Ser178 and Ser190. 2 disordered regions span residues 214–236 (KATK…SSNM) and 336–403 (EKSE…EKPV). Residues 219–236 (QPVNTSSVTVKSNRSSNM) are compositionally biased toward polar residues. 2 stretches are compositionally biased toward basic and acidic residues: residues 336 to 345 (EKSEPVDQRR) and 362 to 376 (ETSE…EWKA). The residue at position 534 (Ser534) is a Phosphoserine. A phosphothreonine mark is found at Thr579 and Thr582. Ser595 is modified (phosphoserine). 2 positions are modified to phosphothreonine: Thr596 and Thr597. The residue at position 599 (Tyr599) is a Phosphotyrosine. At Ser602 the chain carries Phosphoserine.

This sequence belongs to the CKAP2 family. As to quaternary structure, associates with alpha- and beta-tubulins. Abundant in testis, thymus, and in tumor derived cell lines, while barely detectable in liver, prostate, and kidney.

It is found in the cytoplasm. The protein localises to the cytoskeleton. Its subcellular location is the spindle. The protein resides in the spindle pole. Functionally, possesses microtubule stabilizing properties. Involved in regulating aneuploidy, cell cycling, and cell death in a p53/TP53-dependent manner. This chain is Cytoskeleton-associated protein 2, found in Homo sapiens (Human).